The following is a 337-amino-acid chain: Transaldolase (337 aa).

Lys-115 carries the N6-acetyllysine modification. Lys-142 acts as the Schiff-base intermediate with substrate in catalysis. Lys-219 carries the N6-acetyllysine modification. 2 positions are modified to phosphoserine: Ser-237 and Ser-256. N6-acetyllysine is present on residues Lys-269, Lys-286, and Lys-321.

It belongs to the transaldolase family. Type 1 subfamily. As to quaternary structure, homodimer.

It localises to the cytoplasm. It catalyses the reaction D-sedoheptulose 7-phosphate + D-glyceraldehyde 3-phosphate = D-erythrose 4-phosphate + beta-D-fructose 6-phosphate. Its pathway is carbohydrate degradation; pentose phosphate pathway; D-glyceraldehyde 3-phosphate and beta-D-fructose 6-phosphate from D-ribose 5-phosphate and D-xylulose 5-phosphate (non-oxidative stage): step 2/3. Its function is as follows. Transaldolase is important for the balance of metabolites in the pentose-phosphate pathway. The protein is Transaldolase (TALDO1) of Bos taurus (Bovine).